Reading from the N-terminus, the 940-residue chain is Isoleucine--tRNA ligase (940 aa).

Residues 58–68 (PYANGSIHIGH) carry the 'HIGH' region motif. L-isoleucyl-5'-AMP is bound at residue Glu-564. The 'KMSKS' region signature appears at 605-609 (KMSKS). Lys-608 lines the ATP pocket. Zn(2+) contacts are provided by Cys-903, Cys-906, Cys-923, and Cys-926.

Belongs to the class-I aminoacyl-tRNA synthetase family. IleS type 1 subfamily. Monomer. It depends on Zn(2+) as a cofactor.

Its subcellular location is the cytoplasm. It carries out the reaction tRNA(Ile) + L-isoleucine + ATP = L-isoleucyl-tRNA(Ile) + AMP + diphosphate. Catalyzes the attachment of isoleucine to tRNA(Ile). As IleRS can inadvertently accommodate and process structurally similar amino acids such as valine, to avoid such errors it has two additional distinct tRNA(Ile)-dependent editing activities. One activity is designated as 'pretransfer' editing and involves the hydrolysis of activated Val-AMP. The other activity is designated 'posttransfer' editing and involves deacylation of mischarged Val-tRNA(Ile). This Shewanella oneidensis (strain ATCC 700550 / JCM 31522 / CIP 106686 / LMG 19005 / NCIMB 14063 / MR-1) protein is Isoleucine--tRNA ligase.